We begin with the raw amino-acid sequence, 280 residues long: 3-methyl-2-oxobutanoate hydroxymethyltransferase (280 aa).

Mg(2+) is bound by residues Asp-61 and Asp-100. 3-methyl-2-oxobutanoate is bound by residues 61–62 (DS), Asp-100, and Lys-130. Glu-132 serves as a coordination point for Mg(2+). Residue Glu-198 is the Proton acceptor of the active site.

This sequence belongs to the PanB family. As to quaternary structure, homodecamer; pentamer of dimers. It depends on Mg(2+) as a cofactor.

It is found in the cytoplasm. It carries out the reaction 3-methyl-2-oxobutanoate + (6R)-5,10-methylene-5,6,7,8-tetrahydrofolate + H2O = 2-dehydropantoate + (6S)-5,6,7,8-tetrahydrofolate. It participates in cofactor biosynthesis; (R)-pantothenate biosynthesis; (R)-pantoate from 3-methyl-2-oxobutanoate: step 1/2. Its function is as follows. Catalyzes the reversible reaction in which hydroxymethyl group from 5,10-methylenetetrahydrofolate is transferred onto alpha-ketoisovalerate to form ketopantoate. The chain is 3-methyl-2-oxobutanoate hydroxymethyltransferase from Mycolicibacterium vanbaalenii (strain DSM 7251 / JCM 13017 / BCRC 16820 / KCTC 9966 / NRRL B-24157 / PYR-1) (Mycobacterium vanbaalenii).